The primary structure comprises 281 residues: Ras-related protein Rab-40C (281 aa).

Residues Ser-23, Gly-26, Lys-27, and Ser-46 each coordinate GTP. Residues 41 to 49 (SPYAYSNGI) form a switch-I region. Mg(2+) contacts are provided by Ser-46 and Asp-69. Residues Gly-72, Asn-126, and Arg-127 each contribute to the GTP site. The switch-II stretch occupies residues 72-88 (GQGRFCTIFRSYSRGAQ). Positions 175-228 (LMRHGMEKIWRPNRVFSLQDLCCRAIVSCTPVHLIDKLPLPVTIKSHLKSFSMA) constitute an SOCS box domain. The segment at 245-281 (SGAGGGGSKGNSLKRSKSIRPPQSPPQNCSRSNCKIS) is disordered. Polar residues predominate over residues 270–281 (PQNCSRSNCKIS). The S-palmitoyl cysteine moiety is linked to residue Cys-273. Cys-278 is lipidated: S-geranylgeranyl cysteine.

This sequence belongs to the small GTPase superfamily. Rab family. As to quaternary structure, component of the cullin-5-RING E3 ubiquitin-protein ligase complex (ECS(RAB40C) complex) composed of CUL5, Elongin BC (ELOB and ELOC), RNF7/RBX2 and RAB40C. Interacts with protein phosphatase 6 (PP6) complex components ANKRD28, ANKRD52, PPP6C, PP6R1 and PP6R2; the interaction leads to ANKRD28 ubiquitination and decreased PP6 activity. Interacts with DAB2IP; DAB2IP acts as a GAP for RAB40C. The cofactor is Mg(2+).

Its subcellular location is the cell membrane. The protein resides in the cytoplasm. The protein localises to the cytosol. It is found in the golgi apparatus membrane. It catalyses the reaction GTP + H2O = GDP + phosphate + H(+). The protein operates within protein modification; protein ubiquitination. Its activity is regulated as follows. Regulated by guanine nucleotide exchange factors (GEFs) which promote the exchange of bound GDP for free GTP. Regulated by GTPase activating proteins (GAPs) including DAB2IP, which increase the GTP hydrolysis activity. Inhibited by GDP dissociation inhibitors (GDIs). Functionally, RAB40C small GTPase acts as substrate-recognition component of the ECS(RAB40C) E3 ubiquitin ligase complex which mediates the ubiquitination and subsequent proteasomal degradation of target proteins. The Rab40 subfamily belongs to the Rab family that are key regulators of intracellular membrane trafficking, from the formation of transport vesicles to their fusion with membranes. Rabs cycle between an inactive GDP-bound form and an active GTP-bound form that is able to recruit to membranes different sets of downstream effectors directly responsible for vesicle formation, movement, tethering and fusion. As part of the ECS(RAB40C) complex, mediates ANKRD28 ubiquitination and degradation, thereby inhibiting protein phosphatase 6 (PP6) complex activity and focal adhesion assembly during cell migration. Also negatively regulate lipid droplets accumulation in a GTP-dependent manner. The sequence is that of Ras-related protein Rab-40C from Homo sapiens (Human).